The primary structure comprises 291 residues: Elongation factor Ts (291 aa).

Residues 79-82 (TDFV) form an involved in Mg(2+) ion dislocation from EF-Tu region.

The protein belongs to the EF-Ts family.

It is found in the cytoplasm. In terms of biological role, associates with the EF-Tu.GDP complex and induces the exchange of GDP to GTP. It remains bound to the aminoacyl-tRNA.EF-Tu.GTP complex up to the GTP hydrolysis stage on the ribosome. The sequence is that of Elongation factor Ts from Stenotrophomonas maltophilia (strain K279a).